Here is a 129-residue protein sequence, read N- to C-terminus: N16.2 matrix protein (129 aa).

An N-terminal signal peptide occupies residues 1-23 (MKCTLRWTITALVLLGICHLARP). Tandem repeats lie at residues 91–92 (NG), 93–94 (NG), 95–96 (DG), 97–98 (NG), and 99–100 (NG). The segment at 91-100 (NGNGDGNGNG) is 5 X 2 AA tandem repeats of N-G.

The protein belongs to the N16 matrix protein family. As to quaternary structure, heterooligomer; disulfide-linked. Pif97, Pif80, N16 and other proteins form a complex. As to expression, component of conchiolin, the organic matrix of nacre. Expressed at extremely high levels in the dorsal region of the mantle, which region may be responsible for the nacreous layer formation, but only in trace amounts at the mantle edge, which region may be responsible for the prismatic layer formation.

It is found in the secreted. The protein resides in the extracellular space. It localises to the extracellular matrix. Functionally, may be specifically involved in the formation of the nacreous layer. This chain is N16.2 matrix protein, found in Pinctada fucata (Akoya pearl oyster).